A 454-amino-acid chain; its full sequence is Bifunctional protein GlmU (454 aa).

The interval M1–R230 is pyrophosphorylase. Residues L9–G12, K23, Q73, and G78–T79 contribute to the UDP-N-acetyl-alpha-D-glucosamine site. Position 103 (D103) interacts with Mg(2+). UDP-N-acetyl-alpha-D-glucosamine contacts are provided by G140, E155, N170, and N228. N228 is a binding site for Mg(2+). The segment at V231 to Q251 is linker. The tract at residues G252–V454 is N-acetyltransferase. Residues R333 and K351 each coordinate UDP-N-acetyl-alpha-D-glucosamine. Catalysis depends on H363, which acts as the Proton acceptor. Positions 366 and 377 each coordinate UDP-N-acetyl-alpha-D-glucosamine. Residues N386–Y387, S405, A423, and R440 each bind acetyl-CoA.

In the N-terminal section; belongs to the N-acetylglucosamine-1-phosphate uridyltransferase family. It in the C-terminal section; belongs to the transferase hexapeptide repeat family. In terms of assembly, homotrimer. It depends on Mg(2+) as a cofactor.

The protein resides in the cytoplasm. The enzyme catalyses alpha-D-glucosamine 1-phosphate + acetyl-CoA = N-acetyl-alpha-D-glucosamine 1-phosphate + CoA + H(+). It catalyses the reaction N-acetyl-alpha-D-glucosamine 1-phosphate + UTP + H(+) = UDP-N-acetyl-alpha-D-glucosamine + diphosphate. It participates in nucleotide-sugar biosynthesis; UDP-N-acetyl-alpha-D-glucosamine biosynthesis; N-acetyl-alpha-D-glucosamine 1-phosphate from alpha-D-glucosamine 6-phosphate (route II): step 2/2. It functions in the pathway nucleotide-sugar biosynthesis; UDP-N-acetyl-alpha-D-glucosamine biosynthesis; UDP-N-acetyl-alpha-D-glucosamine from N-acetyl-alpha-D-glucosamine 1-phosphate: step 1/1. The protein operates within bacterial outer membrane biogenesis; LPS lipid A biosynthesis. Catalyzes the last two sequential reactions in the de novo biosynthetic pathway for UDP-N-acetylglucosamine (UDP-GlcNAc). The C-terminal domain catalyzes the transfer of acetyl group from acetyl coenzyme A to glucosamine-1-phosphate (GlcN-1-P) to produce N-acetylglucosamine-1-phosphate (GlcNAc-1-P), which is converted into UDP-GlcNAc by the transfer of uridine 5-monophosphate (from uridine 5-triphosphate), a reaction catalyzed by the N-terminal domain. This Shouchella clausii (strain KSM-K16) (Alkalihalobacillus clausii) protein is Bifunctional protein GlmU.